The chain runs to 258 residues: MAAGVPKIDALESLGNPLEDAKRAAAYRAVDENLKFDDHKIIGIGSGSTVVYVAERIGQYLHDPKFYEVASKFICIPTGFQSRNLILDNKLQLGSIEQYPRIDIAFDGADEVDENLQLIKGGGACLFQEKLVSTSAKTFIVVADSRKKSPKHLGKNWRQGVPIEIVPSSYVRVKNDLLEQLHAEKVDIRQGGSAKAGPVVTDNNNFIIDADFGEISDPRKLHREIKLLVGVVETGLFIDNASKAYFGNSDGSVEVTEK.

This sequence belongs to the ribose 5-phosphate isomerase family.

The protein localises to the cytoplasm. The enzyme catalyses aldehydo-D-ribose 5-phosphate = D-ribulose 5-phosphate. The protein operates within carbohydrate degradation; pentose phosphate pathway; D-ribose 5-phosphate from D-ribulose 5-phosphate (non-oxidative stage): step 1/1. The sequence is that of Ribose-5-phosphate isomerase (RKI1) from Saccharomyces cerevisiae (strain YJM789) (Baker's yeast).